The primary structure comprises 101 residues: Chaperone modulatory protein CbpM (101 aa).

The protein belongs to the CbpM family.

Functionally, interacts with CbpA and inhibits both the DnaJ-like co-chaperone activity and the DNA binding activity of CbpA. Together with CbpA, modulates the activity of the DnaK chaperone system. Does not inhibit the co-chaperone activity of DnaJ. The sequence is that of Chaperone modulatory protein CbpM from Pseudomonas putida (strain ATCC 47054 / DSM 6125 / CFBP 8728 / NCIMB 11950 / KT2440).